We begin with the raw amino-acid sequence, 550 residues long: MKALRRSYTSTSSGNSSSSSSLPSSSSSSLPSSSSSSPPSSNSNSYSNSNSSSSSSSWIHLRSVLFVANLSSPSSVTSSDRRRKSPWSRRKRKWALTPHQWRSLFTPEGKLRDGGVGFLKKVRSRGVDPSIRAEVWLFLLGVYDLNSTSEEREAVKTQKRKEYEKLQRRCQMLLKCGNGSTDNLEELPSDEANSQCVRFVDDYKITGPMTSQDVVSALNTDSSDTDSCEDNEDVLLLSSFAHSDEKKPEEDNSNNNSEENSSLLVAAASEVQVEVAVHEDFSTWQRIIRLDALRADSEWANYSPYSTAITESKARRLAESVGLKDYDHLESCRLYHAARLVAILEAYAMYDPEIGYCQGMSDLLSPILAVISEDHEAFWCFVGFMKKARHNFRLDEAGIQRQLSIVSKIIKNKDSQLYKHLENLQAEDCSFVYRMVLVMFRRELSFEQTLCLWEVMWADQAAIRAGVGKSPWSRIRQQAPPTDDLLLYAIAALVLRRKLIIQKYSSMDEIVEECNSMAGQLNVWKLLDDAHHLVVTLHDKIETLSQSQSI.

Positions 1–49 (MKALRRSYTSTSSGNSSSSSSLPSSSSSSLPSSSSSSPPSSNSNSYSNS) are disordered. Residues 7 to 49 (SYTSTSSGNSSSSSSLPSSSSSSLPSSSSSSPPSSNSNSYSNS) show a composition bias toward low complexity. A Rab-GAP TBC domain is found at 126–460 (GVDPSIRAEV…CLWEVMWADQ (335 aa)).

As to quaternary structure, interacts with AGT1 in peroxisome under biotic stress conditions. As to expression, expressed in root meristems, vascular tissues, guard cells, trichomes, styles and receptacles.

The protein resides in the nucleus. Its subcellular location is the peroxisome. Functionally, involved in defense response against fungal and bacterial pathogens. Acts as a negative regulator of jasmonate (JA) responses during infection by the soil-born fungal pathogen Verticillium longisporum. Involved in abscisic acid-dependent stomata closure in response to infection by V.longisporum and Pseudomonas syringae. May be a downstream component of brassinosteroid-mediated signaling. The sequence is that of Rab GTPase-activating protein 22 from Arabidopsis thaliana (Mouse-ear cress).